The following is a 597-amino-acid chain: Gamma-terpinene synthase, chloroplastic (597 aa).

The transit peptide at 1–47 (MATLSMQVSILNKQLKNLNSFGMRASKLPLVARRVDVSTTRLRPICS) directs the protein to the chloroplast. Residues D350 and D354 each coordinate Mn(2+). The DDXXD motif motif lies at 350-354 (DDVYD). Homodimerization regions lie at residues 356–362 (YGTLDEL) and 428–464 (EAKW…YFTL). 2 residues coordinate Mn(2+): D494 and E502.

Belongs to the terpene synthase family. In terms of assembly, homodimer. Mn(2+) serves as cofactor. It depends on Mg(2+) as a cofactor.

Its subcellular location is the plastid. The protein resides in the chloroplast. It carries out the reaction (2E)-geranyl diphosphate = gamma-terpinene + diphosphate. Its pathway is secondary metabolite biosynthesis; terpenoid biosynthesis. Functionally, involved in the biosynthesis of phenolic monoterpenes natural products thymol and carvacrol which have a broad range of biological activities acting as antimicrobial compounds, insecticides, antioxidants and pharmaceutical agents. Monoterpene synthase which catalyzes the conversion of geranyl diphosphate (GPP) to gamma-terpinene and minor amounts of other monoterpenes (e.g. alpha-thujene, alpha-terpinene, myrcene, sabinene, (+)-R-limonene, alpha-pinene and alpha-phellandrene). The sequence is that of Gamma-terpinene synthase, chloroplastic from Thymus caespititius (Cretan thyme).